The following is a 261-amino-acid chain: MSTTRCQVVGFLLSILGLAGCIVATEMDMWSTQDLYDNPVTAVFQYEGLWRSCVQQSSGFTECRPYLTILGLPAMLQAVRALMIVGIVLSVIGLLVAIFALKCIRMGNMDDSAKAKMTLTSGIMFIIAGLCAIAGVSVFANMLVTNFWMSTASMFTSMGGMVQTVQTRYTFGAALFVGWVAGGLTLIGGVLMCIACRGLAPEETNYKAVSYHASGHNVAYRPGGFKASSGFESNTRNKKIYDGGARTEDEGQSPPSKYDYV.

The Cytoplasmic portion of the chain corresponds to 1–6; that stretch reads MSTTRC. Residues 7–27 form a helical membrane-spanning segment; it reads QVVGFLLSILGLAGCIVATEM. Over 28–80 the chain is Extracellular; that stretch reads DMWSTQDLYDNPVTAVFQYEGLWRSCVQQSSGFTECRPYLTILGLPAMLQAVR. The helical transmembrane segment at 81–101 threads the bilayer; it reads ALMIVGIVLSVIGLLVAIFAL. Over 102–122 the chain is Cytoplasmic; sequence KCIRMGNMDDSAKAKMTLTSG. The chain crosses the membrane as a helical span at residues 123–143; sequence IMFIIAGLCAIAGVSVFANML. Over 144–174 the chain is Extracellular; it reads VTNFWMSTASMFTSMGGMVQTVQTRYTFGAA. A helical transmembrane segment spans residues 175 to 195; it reads LFVGWVAGGLTLIGGVLMCIA. Residues 195-261 form a required for role in regulation of RANKL-induced osteoclast differentiation region; it reads ACRGLAPEET…QSPPSKYDYV (67 aa). The Cytoplasmic portion of the chain corresponds to 196–261; that stretch reads CRGLAPEETN…QSPPSKYDYV (66 aa). Residue Ser-214 is modified to Phosphoserine. A disordered region spans residues 228-261; it reads SSGFESNTRNKKIYDGGARTEDEGQSPPSKYDYV. Over residues 239-249 the composition is skewed to basic and acidic residues; sequence KIYDGGARTED.

It belongs to the claudin family. As to quaternary structure, interacts with TJP2/ZO-2. Interacts with TJP1/ZO-1. Interacts with YAP1 (phosphorylated); the interaction sequesters YAP1 away from the nucleus and thereby restricts transcription of YAP1 target genes. Interacts with CLDN19.

The protein resides in the cell junction. It localises to the tight junction. It is found in the cell membrane. In terms of biological role, involved in alveolar fluid homeostasis via regulation of alveolar epithelial tight junction composition and therefore ion transport and solute permeability, potentially via downstream regulation of the actin cytoskeleton organization and beta-2-adrenergic signaling. Required for lung alveolarization and maintenance of the paracellular alveolar epithelial barrier. Acts to maintain epithelial progenitor cell proliferation and organ size, via regulation of YAP1 localization away from the nucleus and thereby restriction of YAP1 target gene transcription. Acts as a negative regulator of RANKL-induced osteoclast differentiation, potentially via relocation of TJP2/ZO-2 away from the nucleus, subsequently involved in bone resorption in response to calcium deficiency. Mediates the osteoprotective effects of estrogen, potentially via acting downstream of estrogen signaling independently of RANKL signaling pathways. The protein is Claudin-18 (CLDN18) of Bos taurus (Bovine).